An 84-amino-acid polypeptide reads, in one-letter code: Small ribosomal subunit protein bS20 (84 aa).

The protein belongs to the bacterial ribosomal protein bS20 family.

Functionally, binds directly to 16S ribosomal RNA. This is Small ribosomal subunit protein bS20 from Ligilactobacillus salivarius (strain UCC118) (Lactobacillus salivarius).